A 335-amino-acid chain; its full sequence is Foldase protein PrsA (335 aa).

Positions 1-20 are cleaved as a signal peptide; it reads MKKKIFAGAVTLLSVAVLAA. C21 is lipidated: N-palmitoyl cysteine. A lipid anchor (S-diacylglycerol cysteine) is attached at C21. A PpiC domain is found at 142–239; the sequence is TPEVTAQIIK…ASYYIVKLVK (98 aa). The tract at residues 300 to 335 is disordered; the sequence is TGSSTSSSSAASSSKTSESSSAAESSSKEASSSAAE. The span at 302–335 shows a compositional bias: low complexity; the sequence is SSTSSSSAASSSKTSESSSAAESSSKEASSSAAE.

Belongs to the PrsA family.

It is found in the cell membrane. The catalysed reaction is [protein]-peptidylproline (omega=180) = [protein]-peptidylproline (omega=0). In terms of biological role, plays a major role in protein secretion by helping the post-translocational extracellular folding of several secreted proteins. In Streptococcus sanguinis (strain SK36), this protein is Foldase protein PrsA.